A 647-amino-acid chain; its full sequence is Protein cueball (647 aa).

A signal peptide spans 1–22 (MLWCPSVLVPLIAVAACLPVLA). The Extracellular segment spans residues 23-534 (IGTPLEWEFA…CMTPSPWTSN (512 aa)). Residues Asn-80 and Asn-106 are each glycosylated (N-linked (GlcNAc...) asparagine). LDL-receptor class B repeat units lie at residues 119-166 (RNLF…DVCR), 167-211 (RKLY…DQLS), and 212-257 (DRIF…TNDA). Residue Asn-175 is glycosylated (N-linked (GlcNAc...) asparagine). The N-linked (GlcNAc...) asparagine glycan is linked to Asn-316. EGF-like domains lie at 365-401 (DEKT…SRCE) and 436-473 (EISK…ERCE). 5 disulfide bridges follow: Cys-376-Cys-389, Cys-391-Cys-400, Cys-440-Cys-450, Cys-444-Cys-461, and Cys-463-Cys-472. An N-linked (GlcNAc...) asparagine glycan is attached at Asn-475. A helical membrane pass occupies residues 535–555 (VIIVLVLGIVSCFFLVAVIVH). At 556 to 647 (GFRRLYKPKR…LIHNMDDDLY (92 aa)) the chain is on the cytoplasmic side.

It belongs to the cueball family.

The protein resides in the cell membrane. Functionally, has a role in spermatogenesis and oogenesis. This Drosophila persimilis (Fruit fly) protein is Protein cueball.